The following is a 285-amino-acid chain: E2F-associated phosphoprotein (285 aa).

N-acetylmethionine is present on Met-1. The interval 1 to 30 (MNRLPDDYDPYAVEEPSDEEPALSSSEDEV) is disordered. Residues 15–30 (EPSDEEPALSSSEDEV) show a composition bias toward acidic residues. At Ser-17 the chain carries Phosphoserine. Thr-37 is subject to Phosphothreonine. The disordered stretch occupies residues 48 to 96 (CLTGESESSSEDEFEKEMEAELNSTMKTMEDKLSSLGTGSSSGNGKVAT). A compositionally biased stretch (acidic residues) spans 55 to 67 (SSSEDEFEKEMEA). Low complexity predominate over residues 81–92 (SSLGTGSSSGNG). Phosphoserine is present on residues Ser-109 and Ser-111. The interval 118-144 (VQVTKKKKKKQHKIPTNDELLYDPEKD) is disordered. The segment covering 121–130 (TKKKKKKQHK) has biased composition (basic residues).

In terms of assembly, interacts with E2F1. The C-terminal half binds the N-terminal of E2F1. Also interacts with E2F2 and E2F3, but not E2F4. Ubiquitously expressed. Highest levels in heart, placenta, skeletal muscle and pancreas. Lower levels in brain, lung and kidney. In the brain, expressed in all regions with high levels in the cerebellum and cerebral cortex. Expressed in COS1 and transformed skin fibroblasts.

The protein resides in the cytoplasm. It is found in the nucleus. Functionally, may play an important role in the fine-tuning of both major E2F1 activities, the regulation of the cell-cycle and the induction of apoptosis. Promotes S-phase entry, and inhibits p14(ARP) expression. The chain is E2F-associated phosphoprotein (EAPP) from Homo sapiens (Human).